The sequence spans 144 residues: Large ribosomal subunit protein uL11 (144 aa).

This sequence belongs to the universal ribosomal protein uL11 family. As to quaternary structure, part of the ribosomal stalk of the 50S ribosomal subunit. Interacts with L10 and the large rRNA to form the base of the stalk. L10 forms an elongated spine to which L12 dimers bind in a sequential fashion forming a multimeric L10(L12)X complex. Contacts the CTC protein (RL25). In terms of processing, one or more lysine residues are methylated.

In terms of biological role, forms part of the ribosomal stalk which helps the ribosome interact with GTP-bound translation factors. In Deinococcus radiodurans (strain ATCC 13939 / DSM 20539 / JCM 16871 / CCUG 27074 / LMG 4051 / NBRC 15346 / NCIMB 9279 / VKM B-1422 / R1), this protein is Large ribosomal subunit protein uL11.